Here is a 165-residue protein sequence, read N- to C-terminus: UPF0303 protein Bphyt_1734 (165 aa).

Belongs to the UPF0303 family.

The sequence is that of UPF0303 protein Bphyt_1734 from Paraburkholderia phytofirmans (strain DSM 17436 / LMG 22146 / PsJN) (Burkholderia phytofirmans).